A 45-amino-acid chain; its full sequence is uncharacterized protein (45 aa).

This is an uncharacterized protein from Escherichia coli (Bacteriophage T4).